Here is a 439-residue protein sequence, read N- to C-terminus: Glutamine synthetase (439 aa).

In terms of domain architecture, GS beta-grasp spans 12-93; the sequence is RSPKFVQLIF…VYGYIYKDGK (82 aa). The GS catalytic domain maps to 99–439; sequence PRGVLKRVIE…EWELERYFFI (341 aa). Positions 122 and 124 each coordinate Mg(2+). Glutamate 172 contacts ATP. Mg(2+) contacts are provided by glutamate 177 and glutamate 184. Glycine 229 serves as a coordination point for L-glutamate. Histidine 233 contacts Mg(2+). Residues 235-237 and serine 237 contribute to the ATP site; that span reads HIS. L-glutamate contacts are provided by arginine 283, glutamate 289, and arginine 301. Positions 301 and 306 each coordinate ATP. Glutamate 318 is a binding site for Mg(2+). Arginine 320 serves as a coordination point for L-glutamate.

Belongs to the glutamine synthetase family. Oligomer of 12 subunits arranged in the form of two hexagons. It depends on Mg(2+) as a cofactor.

It localises to the cytoplasm. The catalysed reaction is L-glutamate + NH4(+) + ATP = L-glutamine + ADP + phosphate + H(+). Its function is as follows. Probably involved in nitrogen metabolism via ammonium assimilation. Catalyzes the ATP-dependent biosynthesis of glutamine from glutamate and ammonia. The protein is Glutamine synthetase of Pyrococcus abyssi (strain GE5 / Orsay).